The chain runs to 396 residues: MSIASNSTVIILGSTGSIGTQGLDVIARHPERFTVTGLAAGGAHIELLAQQAAQFHVSEVAVFDETKIPALQAALAQAGAQGVRVTGGPDSVIAMAGSGANVVLNGITGSIGLEPSIAALKAGSQLALANKESVVAGGHLLFSAQVRENQINPVDSEHSAIWQSLRSGTHAEVAKLVVTASGGPFRGWKRADMENITPEQALHHPTWNMGPVVTINSSTLMNKGLEVIEASRLFDVPPERIDVTVHPQSIVHSMVEFVDGATICQASPPDMRLPIALGLSAPDRMANVAAACDWTKAATWTFEPLDDEAFPAVQLARHCLAASEKHTAVLNAANEQAVHAFLEHRLPYLGIVDTVKAVLDQMDAELRGNPLFTDVEEMNQLELEARRRADDLINKQ.

NADPH contacts are provided by Thr-15, Gly-16, Ser-17, Ile-18, Gly-41, and Asn-130. Lys-131 lines the 1-deoxy-D-xylulose 5-phosphate pocket. An NADPH-binding site is contributed by Glu-132. Asp-155 contacts Mn(2+). 4 residues coordinate 1-deoxy-D-xylulose 5-phosphate: Ser-156, Glu-157, Ser-181, and His-204. Residue Glu-157 coordinates Mn(2+). Position 210 (Gly-210) interacts with NADPH. 1-deoxy-D-xylulose 5-phosphate is bound by residues Ser-217, Asn-222, Lys-223, and Glu-226. Position 226 (Glu-226) interacts with Mn(2+).

The protein belongs to the DXR family. It depends on Mg(2+) as a cofactor. Requires Mn(2+) as cofactor.

It catalyses the reaction 2-C-methyl-D-erythritol 4-phosphate + NADP(+) = 1-deoxy-D-xylulose 5-phosphate + NADPH + H(+). The protein operates within isoprenoid biosynthesis; isopentenyl diphosphate biosynthesis via DXP pathway; isopentenyl diphosphate from 1-deoxy-D-xylulose 5-phosphate: step 1/6. In terms of biological role, catalyzes the NADPH-dependent rearrangement and reduction of 1-deoxy-D-xylulose-5-phosphate (DXP) to 2-C-methyl-D-erythritol 4-phosphate (MEP). In Bifidobacterium longum subsp. infantis (strain ATCC 15697 / DSM 20088 / JCM 1222 / NCTC 11817 / S12), this protein is 1-deoxy-D-xylulose 5-phosphate reductoisomerase.